The primary structure comprises 353 residues: Phosphoribosylformylglycinamidine cyclo-ligase (353 aa).

It belongs to the AIR synthase family.

Its subcellular location is the cytoplasm. It carries out the reaction 2-formamido-N(1)-(5-O-phospho-beta-D-ribosyl)acetamidine + ATP = 5-amino-1-(5-phospho-beta-D-ribosyl)imidazole + ADP + phosphate + H(+). It participates in purine metabolism; IMP biosynthesis via de novo pathway; 5-amino-1-(5-phospho-D-ribosyl)imidazole from N(2)-formyl-N(1)-(5-phospho-D-ribosyl)glycinamide: step 2/2. The sequence is that of Phosphoribosylformylglycinamidine cyclo-ligase from Ralstonia nicotianae (strain ATCC BAA-1114 / GMI1000) (Ralstonia solanacearum).